The sequence spans 621 residues: Chaperone protein HscA homolog (621 aa).

The protein belongs to the heat shock protein 70 family.

Functionally, chaperone involved in the maturation of iron-sulfur cluster-containing proteins. Has a low intrinsic ATPase activity which is markedly stimulated by HscB. The protein is Chaperone protein HscA homolog of Cupriavidus metallidurans (strain ATCC 43123 / DSM 2839 / NBRC 102507 / CH34) (Ralstonia metallidurans).